Consider the following 217-residue polypeptide: ATP phosphoribosyltransferase (217 aa).

It belongs to the ATP phosphoribosyltransferase family. Short subfamily. Heteromultimer composed of HisG and HisZ subunits.

Its subcellular location is the cytoplasm. It carries out the reaction 1-(5-phospho-beta-D-ribosyl)-ATP + diphosphate = 5-phospho-alpha-D-ribose 1-diphosphate + ATP. It functions in the pathway amino-acid biosynthesis; L-histidine biosynthesis; L-histidine from 5-phospho-alpha-D-ribose 1-diphosphate: step 1/9. In terms of biological role, catalyzes the condensation of ATP and 5-phosphoribose 1-diphosphate to form N'-(5'-phosphoribosyl)-ATP (PR-ATP). Has a crucial role in the pathway because the rate of histidine biosynthesis seems to be controlled primarily by regulation of HisG enzymatic activity. This is ATP phosphoribosyltransferase from Burkholderia orbicola (strain MC0-3).